The chain runs to 224 residues: CDP-diacylglycerol--inositol 3-phosphatidyltransferase (224 aa).

At 1 to 8 (MTIAEHDN) the chain is on the cytoplasmic side. A helical transmembrane segment spans residues 9 to 29 (VFIFVPNLIGYARIVLALIAF). Residues 30–35 (WFMSTN) are Lumenal-facing. The chain crosses the membrane as a helical span at residues 36 to 52 (YVISGWCYVTSALLDAV). Mg(2+)-binding residues include aspartate 50 and aspartate 53. The Cytoplasmic segment spans residues 53 to 76 (DGQAARAFNQSTRFGAMLDQLTDR). Residues glycine 54, arginine 58, and threonine 64 each coordinate a CDP-1,2-diacyl-sn-glycerol. 2 residues coordinate Mg(2+): aspartate 71 and aspartate 75. Catalysis depends on aspartate 75, which acts as the Proton acceptor. A helical transmembrane segment spans residues 77–97 (CGTTGLLVTLAYFYPRYMFWF). Position 98 (glutamine 98) is a topological domain, lumenal. The helical transmembrane segment at 99–119 (LSIAIDVACHWLFMQTSVVVG) threads the bilayer. Topologically, residues 120–138 (RSSHKVNDNFIMRLYYQKD) are cytoplasmic. The helical transmembrane segment at 139-159 (ILTFMCCVNELFYVCLYLLHF) threads the bilayer. Over 160–163 (TYGP) the chain is Lumenal. Residues 164–184 (LIFGASLFKILAFLTGPFAVL) traverse the membrane as a helical segment. Residues 185–224 (KALISVMHAYVAGIDLAAVDVRERQERRQKSEPVSGKKVE) are Cytoplasmic-facing.

The protein belongs to the CDP-alcohol phosphatidyltransferase class-I family. The cofactor is Mn(2+). Mg(2+) serves as cofactor. As to expression, in adults, expression is higher in the head than in the body (at protein level).

Its subcellular location is the apical cell membrane. The protein resides in the lateral cell membrane. It catalyses the reaction a CDP-1,2-diacyl-sn-glycerol + myo-inositol = a 1,2-diacyl-sn-glycero-3-phospho-(1D-myo-inositol) + CMP + H(+). Its function is as follows. Catalyzes the biosynthesis of phosphatidylinositol (PtdIns) as well as PtdIns:inositol exchange reaction. May thus act to reduce an excessive cellular PtdIns content. The exchange activity is due to the reverse reaction of PtdIns synthase and is dependent on CMP, which is tightly bound to the enzyme. Required for the regeneration of the signaling molecule phosphatidylinositol 4,5-bisphosphate (PtdInsP2) from phosphatidic acid (PA) and maintenance of its steady supply during signaling, thus playing an essential role during phospholipase C-mediated transduction. This function is essential in photoreceptors for light-activated recycling of PtdInsP2 during phototransduction. As a key enzyme of the phosphoinositide pathway, indirectly involved in the polarized secretion of basal membrane (BM) proteins in follicle epithelial (FE) cells through promoting PtdInsP2 synthesis in the apical and lateral plasma membranes of FE cells. PtdInsP2 controls the localization of Crag and perhaps the localization and expression of strat, both of which are essential for restricting the secretion of BM proteins to the basal surface. In Drosophila melanogaster (Fruit fly), this protein is CDP-diacylglycerol--inositol 3-phosphatidyltransferase.